Consider the following 334-residue polypeptide: Probable tRNA pseudouridine synthase B (334 aa).

Residue Asp82 is the Nucleophile of the active site. In terms of domain architecture, PUA spans 250 to 325; that stretch reads LPKVWIRDSA…IAVDVDKVFM (76 aa).

The protein belongs to the pseudouridine synthase TruB family. Type 2 subfamily.

The catalysed reaction is uridine(55) in tRNA = pseudouridine(55) in tRNA. Could be responsible for synthesis of pseudouridine from uracil-55 in the psi GC loop of transfer RNAs. The sequence is that of Probable tRNA pseudouridine synthase B from Thermococcus gammatolerans (strain DSM 15229 / JCM 11827 / EJ3).